We begin with the raw amino-acid sequence, 169 residues long: MELTTPERVLFETEVYEIDDDLKVKRGNVKITESRIMFRSNGNAKLLYISGIQMVEIKKENRWGFFAGGLIFLVSSAIMYLLGLEFGVGSFTSALMLFVLPTAFLFVSLLLLYWWFVTRSYLLDMHTNFGRKLRIRSKSKEDLYEIANAVELVKMGAVRMLQRKERQFV.

2 consecutive transmembrane segments (helical) span residues 62 to 84 (RWGF…LLGL) and 94 to 116 (ALML…YWWF).

The protein resides in the cell membrane. This is an uncharacterized protein from Archaeoglobus fulgidus (strain ATCC 49558 / DSM 4304 / JCM 9628 / NBRC 100126 / VC-16).